The chain runs to 443 residues: ATP-dependent protease ATPase subunit HslU (443 aa).

ATP-binding positions include Ile-18, 60 to 65 (GVGKTE), Asp-256, Glu-321, and Arg-393.

Belongs to the ClpX chaperone family. HslU subfamily. As to quaternary structure, a double ring-shaped homohexamer of HslV is capped on each side by a ring-shaped HslU homohexamer. The assembly of the HslU/HslV complex is dependent on binding of ATP.

The protein resides in the cytoplasm. Its function is as follows. ATPase subunit of a proteasome-like degradation complex; this subunit has chaperone activity. The binding of ATP and its subsequent hydrolysis by HslU are essential for unfolding of protein substrates subsequently hydrolyzed by HslV. HslU recognizes the N-terminal part of its protein substrates and unfolds these before they are guided to HslV for hydrolysis. This is ATP-dependent protease ATPase subunit HslU from Nitrosospira multiformis (strain ATCC 25196 / NCIMB 11849 / C 71).